The primary structure comprises 199 residues: Holliday junction branch migration complex subunit RuvA (199 aa).

Positions 1 to 65 are domain I; that stretch reads MIASLRGKLL…DRGQRLFGFG (65 aa). A domain II region spans residues 66 to 144; sequence SKKDRESFEL…KFEMFLNEGT (79 aa). The flexible linker stretch occupies residues 145 to 155; it reads TESSFVDRETD. The segment at 155 to 199 is domain III; the sequence is DLATLALIQLGFDEKSATKQVADAKKLNPGLSASDIVKQVITGTR.

Belongs to the RuvA family. Homotetramer. Forms an RuvA(8)-RuvB(12)-Holliday junction (HJ) complex. HJ DNA is sandwiched between 2 RuvA tetramers; dsDNA enters through RuvA and exits via RuvB. An RuvB hexamer assembles on each DNA strand where it exits the tetramer. Each RuvB hexamer is contacted by two RuvA subunits (via domain III) on 2 adjacent RuvB subunits; this complex drives branch migration. In the full resolvosome a probable DNA-RuvA(4)-RuvB(12)-RuvC(2) complex forms which resolves the HJ.

It is found in the cytoplasm. The RuvA-RuvB-RuvC complex processes Holliday junction (HJ) DNA during genetic recombination and DNA repair, while the RuvA-RuvB complex plays an important role in the rescue of blocked DNA replication forks via replication fork reversal (RFR). RuvA specifically binds to HJ cruciform DNA, conferring on it an open structure. The RuvB hexamer acts as an ATP-dependent pump, pulling dsDNA into and through the RuvAB complex. HJ branch migration allows RuvC to scan DNA until it finds its consensus sequence, where it cleaves and resolves the cruciform DNA. The protein is Holliday junction branch migration complex subunit RuvA of Leptospira biflexa serovar Patoc (strain Patoc 1 / Ames).